A 379-amino-acid chain; its full sequence is Putative glutamate--cysteine ligase 2 (379 aa).

Belongs to the glutamate--cysteine ligase type 2 family. YbdK subfamily.

The enzyme catalyses L-cysteine + L-glutamate + ATP = gamma-L-glutamyl-L-cysteine + ADP + phosphate + H(+). In terms of biological role, ATP-dependent carboxylate-amine ligase which exhibits weak glutamate--cysteine ligase activity. This is Putative glutamate--cysteine ligase 2 from Roseiflexus castenholzii (strain DSM 13941 / HLO8).